The sequence spans 929 residues: MEPRDPSPEARSSDSESASASSSGSERDADPEPDKAPRRLTKRRFPGLRLFGHRKAITKSGLQHLAPPPPTPGAPCGESERQIRSTVDWSESAAYGEHIWFETNVSGDFCYVGEQYCVAKMLPKSAPRRKCAACKIVVHTPCIGQLEKINFRCKPSFRESGSRNVREPTFVRHHWVHRRRQDGKCRHCGKGFQQKFTFHSKEIVAISCSWCKQAYHSKVSCFMLQQIEEPCSLGVHAAVVIPPTWILRARRPQNTLKASKKKKRASFKRRSSKKGPEEGRWRPFIIRPTPSPLMKPLLVFVNPKSGGNQGAKIIQSFLWYLNPRQVFDLSQGGPREALEMYRKVHNLRILACGGDGTVGWILSTLDQLRLKPPPPVAILPLGTGNDLARTLNWGGGYTDEPVSKILSHVEEGNVVQLDRWDLRAEPNPEAGPEERDDGATDRLPLDVFNNYFSLGFDAHVTLEFHESREANPEKFNSRFRNKMFYAGTAFSDFLMGSSKDLAKHIRVVCDGMDLTPKIQDLKPQCIVFLNIPRYCAGTMPWGHPGEHHDFEPQRHDDGYLEVIGFTMTSLAALQVGGHGERLTQCREVLLTTAKAIPVQVDGEPCKLAASRIRIALRNQATMVQKAKRRSTAPLHSDQQPVPEQLRIQVSRVSMHDYEALHYDKEQLKEASVPLGTVVVPGDSDLELCRAHIERLQQEPDGAGAKSPMCHPLSSKWCFLDATTASRFYRIDRAQEHLNYVTEIAQDEIYILDPELLGASARPDLPTPTSPLPASPCSPTPGSLQGDAALPQGEELIEAAKRNDFCKLQELHRAGGDLMHRDHQSRTLLHHAVSTGSKEVVRYLLDHAPPEILDAVEENGETCLHQAAALGQRTICHYIVEAGASLMKTDQQGDTPRQRAEKAQDTELAAYLENRQHYQMIQREDQETAV.

Positions 1 to 14 (MEPRDPSPEARSSD) are enriched in basic and acidic residues. Disordered stretches follow at residues 1–46 (MEPR…RRFP) and 59–80 (KSGL…GESE). Over residues 15-24 (SESASASSSG) the composition is skewed to low complexity. Residues 25-37 (SERDADPEPDKAP) are compositionally biased toward basic and acidic residues. 2 consecutive Phorbol-ester/DAG-type zinc fingers follow at residues 98–153 (HIWF…NFRC) and 173–231 (HHWV…EEPC). Residues 257 to 281 (KASKKKKRASFKRRSSKKGPEEGRW) are disordered. Over residues 258–273 (ASKKKKRASFKRRSSK) the composition is skewed to basic residues. The mediates interaction with RASGRP1 stretch occupies residues 279–417 (GRWRPFIIRP…HVEEGNVVQL (139 aa)). The region spanning 292–426 (PLMKPLLVFV…LDRWDLRAEP (135 aa)) is the DAGKc domain. The Nuclear export signal motif lies at 362–370 (LSTLDQLRL). The segment at 421–441 (DLRAEPNPEAGPEERDDGATD) is disordered. A Phosphoserine modification is found at Ser-706. Positions 760 to 783 (ARPDLPTPTSPLPASPCSPTPGSL) are disordered. Positions 764-778 (LPTPTSPLPASPCSP) are enriched in pro residues. Ser-782 carries the phosphoserine modification. ANK repeat units lie at residues 823 to 853 (QSRT…EILD) and 858 to 887 (NGET…SLMK). Residues 925–929 (QETAV) carry the PDZ-binding motif.

This sequence belongs to the eukaryotic diacylglycerol kinase family. As to quaternary structure, interacts (via PDZ-binding motif) with the PDZ domain of the syntrophin SNTG1 and that of SNX27. Interacts with IRS1 in the absence of insulin; insulin stimulation decreases this interaction. Found in a ternary complex with IRS1 and PIP5K1A in the absence of insulin. Interacts with PIP5K1A. Forms a signaling complex with RASGRP1 and HRAS.

It is found in the nucleus. Its subcellular location is the cytoplasm. It localises to the cytosol. The protein resides in the cell membrane. The protein localises to the cell projection. It is found in the lamellipodium. The catalysed reaction is a 1,2-diacyl-sn-glycerol + ATP = a 1,2-diacyl-sn-glycero-3-phosphate + ADP + H(+). The enzyme catalyses a 1-O-alkyl-sn-glycerol + ATP = a 1-O-alkyl-sn-glycero-3-phosphate + ADP + H(+). It catalyses the reaction 1-O-alkyl-2-acyl-sn-glycerol + ATP = 1-O-alkyl-2-acyl-sn-glycero-3-phosphate + ADP + H(+). It carries out the reaction 1,2-didecanoyl-sn-glycerol + ATP = 1,2-didecanoyl-sn-glycero-3-phosphate + ADP + H(+). The catalysed reaction is 1,2-ditetradecanoyl-sn-glycerol + ATP = 1,2-ditetradecanoyl-sn-glycero-3-phosphate + ADP + H(+). The enzyme catalyses 1-hexadecanoyl-2-(9Z-octadecenoyl)-sn-glycerol + ATP = 1-hexadecanoyl-2-(9Z-octadecenoyl)-sn-glycero-3-phosphate + ADP + H(+). It catalyses the reaction 1-hexadecanoyl-2-(5Z,8Z,11Z,14Z-eicosatetraenoyl)-sn-glycerol + ATP = 1-hexadecanoyl-2-(5Z,8Z,11Z,14Z-eicosatetraenoyl)-sn-glycero-3-phosphate + ADP + H(+). It carries out the reaction 1-octadecanoyl-2-(9Z-octadecenoyl)-sn-glycerol + ATP = 1-octadecanoyl-2-(9Z-octadecenoyl)-sn-glycero-3-phosphate + ADP + H(+). The catalysed reaction is 1-octadecanoyl-2-(5Z,8Z,11Z,14Z-eicosatetraenoyl)-sn-glycerol + ATP = 1-octadecanoyl-2-(5Z,8Z,11Z,14Z-eicosatetraenoyl)-sn-glycero-3-phosphate + ADP + H(+). The enzyme catalyses 1-octadecanoyl-2-(4Z,7Z,10Z,13Z,16Z,19Z-docosahexaenoyl)-sn-glycerol + ATP = 1-octadecanoyl-2-(4Z,7Z,10Z,13Z,16Z,19Z-docosahexaenoyl)-sn-glycero-3-phosphate + ADP + H(+). It catalyses the reaction 1,2-di-(9Z-octadecenoyl)-sn-glycerol + ATP = 1,2-di-(9Z-octadecenoyl)-sn-glycero-3-phosphate + ADP + H(+). It carries out the reaction 1-(9Z-octadecenoyl)-2-hexadecanoyl-sn-glycerol + ATP = 1-(9Z)-octadecenoyl-2-hexadecanoyl-sn-glycero-3-phosphate + ADP + H(+). The catalysed reaction is 1-eicosanoyl-2-(5Z,8Z,11Z,14Z)-eicosatetraenoyl-sn-glycerol + ATP = 1-eicosanoyl-2-(5Z,8Z,11Z,14Z)-eicosatetraenoyl-sn-glycero-3-phosphate + ADP + H(+). The enzyme catalyses 1,2-di-(5Z,8Z,11Z,14Z)-eicosatetraenoyl-sn-glycerol + ATP = 1,2-di-(5Z,8Z,11Z,14Z)-eicosatetraenoyl-sn-glycero-3-phosphate + ADP + H(+). It catalyses the reaction 1-O-hexadecyl-2-acetyl-sn-glycerol + ATP = 1-O-hexadecyl-2-acetyl-sn-glycero-3-phosphate + ADP + H(+). It carries out the reaction 1-O-hexadecyl-2-(5Z,8Z,11Z,14Z-eicosatetraenoyl)-sn-glycerol + ATP = 1-O-hexadecyl-2-(5Z,8Z,11Z,14Z-eicosatetraenoyl)-sn-glycero-3-phosphate + ADP + H(+). The catalysed reaction is 1-O-hexadecyl-2-(9Z-octadecenoyl)-sn-glycerol + ATP = 1-O-hexadecyl-2-(9Z-octadecenoyl)-sn-glycero-3-phosphate + ADP + H(+). The enzyme catalyses 1-O-hexadecyl-sn-glycerol + ATP = 1-O-hexadecyl-sn-glycero-3-phosphate + ADP + H(+). It participates in lipid metabolism; glycerolipid metabolism. Functionally, diacylglycerol kinase that converts diacylglycerol/DAG into phosphatidic acid/phosphatidate/PA and regulates the respective levels of these two bioactive lipids. Thereby, acts as a central switch between the signaling pathways activated by these second messengers with different cellular targets and opposite effects in numerous biological processes. Also plays an important role in the biosynthesis of complex lipids. Does not exhibit an acyl chain-dependent substrate specificity among diacylglycerol species. Can also phosphorylate 1-alkyl-2-acylglycerol in vitro but less efficiently and with a preference for alkylacylglycerols containing an arachidonoyl group. The biological processes it is involved in include T cell activation since it negatively regulates T-cell receptor signaling which is in part mediated by diacylglycerol. By generating phosphatidic acid, stimulates PIP5KIA activity which regulates actin polymerization. Through the same mechanism could also positively regulate insulin-induced translocation of SLC2A4 to the cell membrane. Regulates RASGRP1 activity. This Rattus norvegicus (Rat) protein is Diacylglycerol kinase zeta.